The chain runs to 548 residues: Membrane protein insertase YidC (548 aa).

Residues 6–26 traverse the membrane as a helical segment; that stretch reads NLLVIALLFVSFMIWQAWEQD. The tract at residues 28–55 is disordered; it reads NPQPQAQQTTQTTTTAAGSAADQGVPAS. Low complexity predominate over residues 30–50; the sequence is QPQAQQTTQTTTTAAGSAADQ. Helical transmembrane passes span 350 to 370, 420 to 440, 458 to 478, and 499 to 519; these read FVGN…GIMY, LGGC…YYML, LSAQ…MFFI, and PVIF…YYIV.

This sequence belongs to the OXA1/ALB3/YidC family. Type 1 subfamily. Interacts with the Sec translocase complex via SecD. Specifically interacts with transmembrane segments of nascent integral membrane proteins during membrane integration.

It localises to the cell inner membrane. Its function is as follows. Required for the insertion and/or proper folding and/or complex formation of integral membrane proteins into the membrane. Involved in integration of membrane proteins that insert both dependently and independently of the Sec translocase complex, as well as at least some lipoproteins. Aids folding of multispanning membrane proteins. The chain is Membrane protein insertase YidC from Escherichia coli O139:H28 (strain E24377A / ETEC).